Consider the following 230-residue polypeptide: Large ribosomal subunit protein uL1 (230 aa).

This sequence belongs to the universal ribosomal protein uL1 family. As to quaternary structure, part of the 50S ribosomal subunit.

Functionally, binds directly to 23S rRNA. The L1 stalk is quite mobile in the ribosome, and is involved in E site tRNA release. In terms of biological role, protein L1 is also a translational repressor protein, it controls the translation of the L11 operon by binding to its mRNA. This chain is Large ribosomal subunit protein uL1, found in Bradyrhizobium sp. (strain BTAi1 / ATCC BAA-1182).